A 210-amino-acid chain; its full sequence is Na(+)-translocating NADH-quinone reductase subunit D (210 aa).

6 helical membrane-spanning segments follow: residues 14–34 (PIVNNNPIALQVLGVCSALAV), 42–62 (LVMALALTAVTAFSNLFISMI), 72–92 (IIVQMTIIASLVIVVDQLLQA), 103–123 (VFVGLIITNCIVMGRAEAYAM), 131–151 (FMDGIGNGLGYGAILLAVGFV), and 178–198 (NGLLLLPPSAFFLIGILIWII).

This sequence belongs to the NqrDE/RnfAE family. As to quaternary structure, composed of six subunits; NqrA, NqrB, NqrC, NqrD, NqrE and NqrF.

The protein resides in the cell inner membrane. The enzyme catalyses a ubiquinone + n Na(+)(in) + NADH + H(+) = a ubiquinol + n Na(+)(out) + NAD(+). Functionally, NQR complex catalyzes the reduction of ubiquinone-1 to ubiquinol by two successive reactions, coupled with the transport of Na(+) ions from the cytoplasm to the periplasm. NqrA to NqrE are probably involved in the second step, the conversion of ubisemiquinone to ubiquinol. This is Na(+)-translocating NADH-quinone reductase subunit D from Shewanella sp. (strain ANA-3).